A 196-amino-acid chain; its full sequence is Phosphoheptose isomerase (196 aa).

The SIS domain occupies 34–192 (MVQCLLGGNK…CEIIDTTLFP (159 aa)). 49-51 (NGG) lines the substrate pocket. His58 and Gln62 together coordinate Zn(2+). Residues Gln62, 91 to 92 (ND), 117 to 119 (STS), Ser122, and Gln172 contribute to the substrate site. Zn(2+) is bound by residues Gln172 and His180.

Belongs to the SIS family. GmhA subfamily. In terms of assembly, homotetramer. It depends on Zn(2+) as a cofactor.

Its subcellular location is the cytoplasm. The catalysed reaction is 2 D-sedoheptulose 7-phosphate = D-glycero-alpha-D-manno-heptose 7-phosphate + D-glycero-beta-D-manno-heptose 7-phosphate. Its pathway is carbohydrate biosynthesis; D-glycero-D-manno-heptose 7-phosphate biosynthesis; D-glycero-alpha-D-manno-heptose 7-phosphate and D-glycero-beta-D-manno-heptose 7-phosphate from sedoheptulose 7-phosphate: step 1/1. Its function is as follows. Catalyzes the isomerization of sedoheptulose 7-phosphate in D-glycero-D-manno-heptose 7-phosphate. The protein is Phosphoheptose isomerase of Colwellia psychrerythraea (strain 34H / ATCC BAA-681) (Vibrio psychroerythus).